Reading from the N-terminus, the 5085-residue chain is Protein piccolo (5085 aa).

Low complexity predominate over residues 1–20 (MGNEASLEGEGLPEGLAAAA). Disordered stretches follow at residues 1 to 142 (MGNE…DFKE) and 173 to 516 (DLIS…TPAQ). Over residues 92 to 101 (PGKPPDPGRP) the composition is skewed to pro residues. 3 stretches are compositionally biased toward basic and acidic residues: residues 110-121 (RTTDTFRSEQKL), 132-142 (KESKSRTDFKE), and 184-198 (ETTK…EQGK). Residues Ser-211 and Ser-231 each carry the phosphoserine modification. A compositionally biased stretch (polar residues) spans 227 to 240 (QQDSSPKSVSSQQA). A compositionally biased stretch (low complexity) spans 253–268 (PSQQSPAQTPAQQASP). 3 stretches are compositionally biased toward polar residues: residues 275-285 (QPGSAKATVQQ), 318-332 (KTSS…SLAQ), and 375-391 (TPAQ…QQPG). The interval 372–491 (PTKTPAQQSG…LAKPSAQQPT (120 aa)) is 12 X 10 AA tandem approximate repeats of P-A-K-P-Q-P-Q-Q-P-X. A compositionally biased stretch (pro residues) spans 392–408 (PTKPSPQQPIPAKPQPQ). Over residues 409 to 423 (QPVATKTQPQQSAPA) the composition is skewed to low complexity. Residues 424–472 (KPQPQQPAPAKPQPQQPTPAKPQPQPPTPAKPQPQPPTATKPQPQPPTA) are compositionally biased toward pro residues. Positions 486-499 (SAQQPTKSISQTVT) are enriched in polar residues. A C4-type zinc finger spans residues 523–547 (CPLCNTTELLLHIPEKANFNTCTEC). 5 disordered regions span residues 586–880 (AAIP…TVTG), 896–1012 (LIST…ACPL), 1069–1357 (QLGD…PSDL), 1373–1604 (STLV…EELV), and 1622–1815 (TIAD…SDPE). Residues 596-613 (PKAATAPTATASKSPVPS) show a composition bias toward low complexity. The segment covering 618–654 (PKKEPPSKQDSPKALESKKPPEPKKPPEPKKPPEPKK) has biased composition (basic and acidic residues). Residues 672-682 (APQLPVAEALP) are compositionally biased toward low complexity. Over residues 683-693 (EPAPPKEPSGP) the composition is skewed to pro residues. Residues 705–717 (VEPKQPKMTETRA) are compositionally biased toward basic and acidic residues. A compositionally biased stretch (polar residues) spans 718–767 (DIQSSSTTKPDILSSQVQSQAQVKTASPLKTDSAKPSQSFPPTGEKTTPL). Residues 790–808 (ESKDPKHIDPIQKKDEPKK) show a composition bias toward basic and acidic residues. 2 positions are modified to phosphoserine: Ser-857 and Ser-869. Polar residues-rich tracts occupy residues 867 to 878 (PKSQPTTPQETV), 896 to 906 (LISTAGQQGPH), and 917 to 936 (QAPT…STGQ). Residue Thr-873 is modified to Phosphothreonine. Residues 990–1004 (EPEKAVPAHKPDKTT) are compositionally biased toward basic and acidic residues. The C4-type zinc finger occupies 1010–1033 (CPLCRTELNLGSQEPPNFNTCTEC). Residues 1077-1092 (PPAPSGPKASPMPAPA) show a composition bias toward pro residues. Over residues 1110–1129 (KEAEGKTEAEKPVPEKETAS) the composition is skewed to basic and acidic residues. Residue Thr-1133 is modified to Phosphothreonine. 3 stretches are compositionally biased toward basic and acidic residues: residues 1141–1150 (QKLEESEGKK), 1157–1199 (PEKK…KLPP), and 1274–1295 (SSKD…DKSD). A compositionally biased stretch (polar residues) spans 1300–1318 (QQPKSPQGLSDTGYSSDGI). Ser-1304, Ser-1314, Ser-1315, Ser-1344, Ser-1346, Ser-1349, Ser-1350, and Ser-1353 each carry phosphoserine. Positions 1331 to 1345 (SDEKDLLKGLKKDSF) are enriched in basic and acidic residues. Low complexity predominate over residues 1346 to 1355 (SQESSPSSPS). Basic and acidic residues predominate over residues 1378–1396 (EKAEKKTQPQKISPEKPQD). Residues 1397 to 1407 (QQKTQTASETL) show a composition bias toward polar residues. Residues 1417 to 1456 (KESQEKKVSPKKDSEQGFPSRKEHKEKPELVDDLSPRRAS) are compositionally biased toward basic and acidic residues. Phosphoserine is present on residues Ser-1451, Ser-1463, Ser-1464, Ser-1466, Ser-1469, Ser-1493, Ser-1496, Ser-1517, and Ser-1519. The span at 1511–1523 (SADEDASGSEDEE) shows a compositional bias: acidic residues. A Phosphothreonine modification is found at Thr-1564. A phosphoserine mark is found at Ser-1565, Ser-1575, and Ser-1587. Residues 1578 to 1587 (DEDDETFDES) are compositionally biased toward acidic residues. The segment covering 1588-1599 (PELKFRETKSQE) has biased composition (basic and acidic residues). Residues 1622–1635 (TIADKYSSESSQKK) show a composition bias toward polar residues. Over residues 1640–1650 (FDEEPELEMES) the composition is skewed to acidic residues. Ser-1650 carries the phosphoserine modification. A Phosphothreonine modification is found at Thr-1652. Ser-1654 and Ser-1659 each carry phosphoserine. A compositionally biased stretch (polar residues) spans 1662-1679 (EGSSSLHASSFTPGTSPT). A compositionally biased stretch (acidic residues) spans 1719–1732 (DSSEEEELREEEEL). Phosphoserine is present on residues Ser-1720 and Ser-1721. Residues 1733–1746 (LKEQEKQRELEQQQ) show a composition bias toward basic and acidic residues. Residue Thr-1772 is modified to Phosphothreonine. At Ser-1778 the chain carries Phosphoserine. The segment covering 1787-1802 (EELRQAAEMEELHRSS) has biased composition (basic and acidic residues). Phosphoserine is present on residues Ser-1807, Ser-1812, Ser-1820, and Ser-1841. 3 disordered regions span residues 2116 to 2139 (PSES…SSVC), 2275 to 2385 (ELTK…PTYP), and 2456 to 2486 (KPPI…TGLS). Over residues 2121 to 2139 (TSVPPSDTPSLTSSISSVC) the composition is skewed to low complexity. Pro residues predominate over residues 2350–2384 (QPPPPPPPPPPSPSTSSPPPTPPLPPATSPKPPTY). The residue at position 2511 (Ser-2511) is a Phosphoserine. O-linked (GlcNAc) threonine glycosylation occurs at Thr-2702. Ser-2976 carries O-linked (GlcNAc) serine glycosylation. Thr-3014 is modified (phosphothreonine). Disordered stretches follow at residues 3350–3457 (KEEK…PLSK) and 3503–3572 (KTYK…LYSP). Position 3374 is a phosphoserine (Ser-3374). Residues 3377–3386 (DDPRNLKKIV) show a composition bias toward basic and acidic residues. Phosphoserine is present on Ser-3388. A phosphothreonine mark is found at Thr-3392 and Thr-3419. Residues 3419–3428 (TDDEDQDEWD) are compositionally biased toward acidic residues. A compositionally biased stretch (polar residues) spans 3511–3523 (GCQTETDSDTQSP). Phosphoserine is present on residues Ser-3522, Ser-3530, Ser-3561, Ser-3565, Ser-3571, Ser-3574, Ser-3577, Ser-3598, Ser-3624, Ser-3626, and Ser-3632. 2 disordered regions span residues 3602–3695 (VLHP…ASRR) and 3774–3816 (AEDR…FIPP). Composition is skewed to polar residues over residues 3647–3663 (EGFT…SGTQ) and 3679–3691 (STGT…TMGT). Ser-3781 carries the post-translational modification Phosphoserine. Residues 3791-3803 (SRVESQHGVERPR) show a composition bias toward basic and acidic residues. A compositionally biased stretch (polar residues) spans 3805-3816 (APQTEFSQFIPP). A phosphoserine mark is found at Ser-4034 and Ser-4150. Disordered regions lie at residues 4225–4248 (ADKP…YGLD) and 4272–4291 (VSFG…LPIS). Over residues 4228 to 4248 (PYSSGSRSRPSSRPSSVYGLD) the composition is skewed to low complexity. Residues 4275–4291 (GHSSSSARTKPTSLPIS) show a composition bias toward polar residues. Phosphoserine is present on residues Ser-4304, Ser-4308, Ser-4311, Ser-4340, and Ser-4376. Residues 4335 to 4357 (RDQFGSSHSLPEVQQHMREESRT) are disordered. Residues 4442–4536 (RVKITRDFKD…EAEICVRLDL (95 aa)) form the PDZ domain. Positions 4589-4638 (VEKGSHAHSGPTSAGSSSVPSPGQPGSPSVSKKKHSSTKPTDGPKAASHP) are disordered. Low complexity predominate over residues 4595–4618 (AHSGPTSAGSSSVPSPGQPGSPSV). Ser-4609 carries the phosphoserine modification. Residues 4639-4768 (ITGEIQLQIN…SHLDNTPRWY (130 aa)) form the C2 1 domain. Residues Asp-4668 and Asp-4674 each coordinate Ca(2+). Residue Ser-4723 is modified to Phosphoserine. Positions 4738, 4740, 4743, and 4746 each coordinate Ca(2+). 2 disordered regions span residues 4775-4851 (ESID…SVAQ) and 4874-4908 (QPTK…SEGS). 2 stretches are compositionally biased toward low complexity: residues 4783-4795 (HSSQ…PKPS) and 4822-4832 (SSPGSSKSSSE). Positions 4840-4851 (PSRSQSKTSVAQ) are enriched in polar residues. The segment covering 4886 to 4908 (SSVSTGSSGSSVGSGYSVDSEGS) has biased composition (low complexity). A C2 2 domain is found at 4950-5075 (VMGEIKLALK…DLRKRIVNWH (126 aa)).

In terms of assembly, interacts with BSN, ERC2/CAST1, RIMS1 and UNC13A. Interacts (via C-terminus) with TRIO (via N-terminus). Interacts with CTBP1. Interacts with SIAH1; this interaction negatively regulates SIAH1 E3 ligase activity. Directly interacts with GIT1 and GIT2. Requires Ca(2+) as cofactor. In terms of tissue distribution, expressed in brain (at protein level).

It localises to the presynaptic active zone. Scaffold protein of the presynaptic cytomatrix at the active zone (CAZ) which is the place in the synapse where neurotransmitter is released. After synthesis, participates in the formation of Golgi-derived membranous organelles termed Piccolo-Bassoon transport vesicles (PTVs) that are transported along axons to sites of nascent synaptic contacts. At the presynaptic active zone, regulates the spatial organization of synaptic vesicle cluster, the protein complexes that execute membrane fusion and compensatory endocytosis. Organizes as well the readily releasable pool of synaptic vesicles and safeguards a fraction of them to be not immediately available for action potential-induced release. Also functions in processes other than assembly such as the regulation of specific presynaptic protein ubiquitination by interacting with SIAH1 or the regulation of presynaptic autophagy. Also mediates synapse to nucleus communication leading to reconfiguration of gene expression by associating with the transcriptional corepressor CTBP1 and by subsequently reducing the size of its pool available for nuclear import. This is Protein piccolo (Pclo) from Rattus norvegicus (Rat).